Reading from the N-terminus, the 305-residue chain is Olfactory receptor 4X1 (305 aa).

Over 1 to 23 (MVATNNVTEIIFVGFSQNWSEQR) the chain is Extracellular. 2 N-linked (GlcNAc...) asparagine glycosylation sites follow: Asn-6 and Asn-18. The helical transmembrane segment at 24–47 (VISVMFLLMYTAVVLGNGLIVVTI) threads the bilayer. Residues 48–55 (LASKVLTS) lie on the Cytoplasmic side of the membrane. Residues 56 to 77 (PMYFFLSYLSFVEICYCSVMAP) form a helical membrane-spanning segment. The Extracellular segment spans residues 78–98 (KLIFDSFIKRKVISLKGCLTQ). A disulfide bridge connects residues Cys-95 and Cys-187. The helical transmembrane segment at 99–118 (MFSLHFFGGTEAFLLMVMAY) threads the bilayer. Topologically, residues 119–137 (DRYVAICKPLHYMAIMNQR) are cytoplasmic. Residues 138 to 156 (MCGLLVRIAWGGGLLHSVG) traverse the membrane as a helical segment. Over 157–193 (QTFLIFQLPFCGPNIMDHYFCDVHPVLELACADTFFI) the chain is Extracellular. A helical transmembrane segment spans residues 194-217 (SLLIITNGGSISVVSFFVLMASYL). Residues 218 to 233 (IILHFLRSHNLEGQHK) are Cytoplasmic-facing. Residues 234–256 (ALSTCASHVTVVDLFFIPCSLVY) traverse the membrane as a helical segment. At 257 to 267 (IRPCVTLPADK) the chain is on the extracellular side. Residues 268 to 287 (IVAVFYTVVTPLLNPVIYSF) traverse the membrane as a helical segment. At 288 to 305 (RNAEVKNAMRRFIGGKVI) the chain is on the cytoplasmic side.

This sequence belongs to the G-protein coupled receptor 1 family.

The protein resides in the cell membrane. Functionally, odorant receptor. The protein is Olfactory receptor 4X1 (OR4X1) of Homo sapiens (Human).